Reading from the N-terminus, the 345-residue chain is Phosphoribosylformylglycinamidine cyclo-ligase (345 aa).

It belongs to the AIR synthase family.

The protein localises to the cytoplasm. It carries out the reaction 2-formamido-N(1)-(5-O-phospho-beta-D-ribosyl)acetamidine + ATP = 5-amino-1-(5-phospho-beta-D-ribosyl)imidazole + ADP + phosphate + H(+). It participates in purine metabolism; IMP biosynthesis via de novo pathway; 5-amino-1-(5-phospho-D-ribosyl)imidazole from N(2)-formyl-N(1)-(5-phospho-D-ribosyl)glycinamide: step 2/2. The sequence is that of Phosphoribosylformylglycinamidine cyclo-ligase from Ligilactobacillus salivarius (strain UCC118) (Lactobacillus salivarius).